Here is a 424-residue protein sequence, read N- to C-terminus: Argininosuccinate synthase (424 aa).

Residues 9–17 and alanine 35 contribute to the ATP site; that span reads AYSGGLDTS. 2 residues coordinate L-citrulline: tyrosine 86 and serine 91. 114-122 contributes to the ATP binding site; that stretch reads SHGATGKGN. L-aspartate is bound by residues threonine 118, asparagine 122, and aspartate 123. An L-citrulline-binding site is contributed by asparagine 122. L-citrulline-binding residues include arginine 126, serine 179, serine 188, glutamate 269, and tyrosine 281.

Belongs to the argininosuccinate synthase family. In terms of assembly, homotetramer.

It catalyses the reaction L-citrulline + L-aspartate + ATP = 2-(N(omega)-L-arginino)succinate + AMP + diphosphate + H(+). The protein operates within amino-acid biosynthesis; L-arginine biosynthesis; L-arginine from L-ornithine and carbamoyl phosphate: step 2/3. Its pathway is nitrogen metabolism; urea cycle; (N(omega)-L-arginino)succinate from L-aspartate and L-citrulline: step 1/1. This Anopheles gambiae (African malaria mosquito) protein is Argininosuccinate synthase.